The primary structure comprises 99 residues: Putative membrane protein insertion efficiency factor (99 aa).

It belongs to the UPF0161 family.

The protein resides in the cell membrane. In terms of biological role, could be involved in insertion of integral membrane proteins into the membrane. The chain is Putative membrane protein insertion efficiency factor from Corynebacterium glutamicum (strain ATCC 13032 / DSM 20300 / JCM 1318 / BCRC 11384 / CCUG 27702 / LMG 3730 / NBRC 12168 / NCIMB 10025 / NRRL B-2784 / 534).